Consider the following 236-residue polypeptide: Peptidase E (236 aa).

Residues serine 122, aspartate 137, and histidine 159 each act as charge relay system in the active site.

This sequence belongs to the peptidase S51 family.

It is found in the cytoplasm. The enzyme catalyses Dipeptidase E catalyzes the hydrolysis of dipeptides Asp-|-Xaa. It does not act on peptides with N-terminal Glu, Asn or Gln, nor does it cleave isoaspartyl peptides.. Hydrolyzes dipeptides containing N-terminal aspartate residues. May play a role in allowing the cell to use peptide aspartate to spare carbon otherwise required for the synthesis of the aspartate family of amino acids. This chain is Peptidase E, found in Shewanella oneidensis (strain ATCC 700550 / JCM 31522 / CIP 106686 / LMG 19005 / NCIMB 14063 / MR-1).